Here is a 340-residue protein sequence, read N- to C-terminus: Biotin synthase (340 aa).

The disordered stretch occupies residues 1–21 (MDAASVSFGSGHDLSSQPRHD). In terms of domain architecture, Radical SAM core spans 53–272 (NHVETANLLS…IAVARIMMPR (220 aa)). [4Fe-4S] cluster-binding residues include Cys68, Cys72, and Cys75. [2Fe-2S] cluster is bound by residues Cys112, Cys143, Cys203, and Arg276.

This sequence belongs to the radical SAM superfamily. Biotin synthase family. In terms of assembly, homodimer. [4Fe-4S] cluster is required as a cofactor. Requires [2Fe-2S] cluster as cofactor.

It catalyses the reaction (4R,5S)-dethiobiotin + (sulfur carrier)-SH + 2 reduced [2Fe-2S]-[ferredoxin] + 2 S-adenosyl-L-methionine = (sulfur carrier)-H + biotin + 2 5'-deoxyadenosine + 2 L-methionine + 2 oxidized [2Fe-2S]-[ferredoxin]. It participates in cofactor biosynthesis; biotin biosynthesis; biotin from 7,8-diaminononanoate: step 2/2. In terms of biological role, catalyzes the conversion of dethiobiotin (DTB) to biotin by the insertion of a sulfur atom into dethiobiotin via a radical-based mechanism. This is Biotin synthase from Nitrobacter hamburgensis (strain DSM 10229 / NCIMB 13809 / X14).